We begin with the raw amino-acid sequence, 329 residues long: Acetyl-coenzyme A carboxylase carboxyl transferase subunit alpha (329 aa).

Positions 40–294 (QLESLASRRR…RAALERHLGE (255 aa)) constitute a CoA carboxyltransferase C-terminal domain.

This sequence belongs to the AccA family. As to quaternary structure, acetyl-CoA carboxylase is a heterohexamer composed of biotin carboxyl carrier protein (AccB), biotin carboxylase (AccC) and two subunits each of ACCase subunit alpha (AccA) and ACCase subunit beta (AccD).

Its subcellular location is the cytoplasm. The enzyme catalyses N(6)-carboxybiotinyl-L-lysyl-[protein] + acetyl-CoA = N(6)-biotinyl-L-lysyl-[protein] + malonyl-CoA. Its pathway is lipid metabolism; malonyl-CoA biosynthesis; malonyl-CoA from acetyl-CoA: step 1/1. Component of the acetyl coenzyme A carboxylase (ACC) complex. First, biotin carboxylase catalyzes the carboxylation of biotin on its carrier protein (BCCP) and then the CO(2) group is transferred by the carboxyltransferase to acetyl-CoA to form malonyl-CoA. The protein is Acetyl-coenzyme A carboxylase carboxyl transferase subunit alpha of Synechococcus sp. (strain CC9902).